The sequence spans 345 residues: Hemin transport protein HmuS (345 aa).

The protein to Y.enterocolitica HemS.

Functionally, part of the binding-protein-dependent transport system for hemin. In Yersinia pestis, this protein is Hemin transport protein HmuS (hmuS).